Here is a 628-residue protein sequence, read N- to C-terminus: MGKIIGIDLGTTNSCVAVMEGGKPVVIANAEGLRTTPSVVAFSKTGERLVGDPAKRQAVTNADKTISSIKRHMGTDYKVEIDGKKYTPQEISAMILQKLKSDAENYLGEKVTEAVITVPAYFNDAQRQATKDAGKIAGLDVKRIINEPTAAALAYGLDNEHEQKIMVYDLGGGTFDVSIIEIGDGVIEVLATAGNNKLGGDDFDNAVTQYMLNDFKAKEGVDLSKDTMALQRLKEAAEKAKKELSSTTQTEINLPYITATAEGPKHFEMTLTRAKFDELTHDLVEKTAEPVKNALSDAGLTASELSKVLLVGGSTRIPAVQDKVKSLTGHEPSKTLNPDECVAIGASIQGGKLAGDAGAGDILLLDVTPLSLSIETMGGIATRLIERNTTIPTKKSQIFSTAADNQTAVDINVVQGERQFARDNKSLGQFRLDGIPPARRGVPQIEVTFDIDANGIVNVSAKDLGTGKEQHITITAGSNMSDEDIDKAVKEAAEFEAQDKKRKDAIDARNEADSMVFQTQKAMDEAGDKLDASDKAAVETDLNALKALVDGSDPENMTDAQVDEIKAAKEKLMESAQKLFAKLYESQQAAGGAGPDMGAGAGPDMGAGASNGSAPYGDDVVDGDYKEV.

Threonine 174 carries the phosphothreonine; by autocatalysis modification. Positions 589-628 (AAGGAGPDMGAGAGPDMGAGASNGSAPYGDDVVDGDYKEV) are disordered. Positions 591 to 605 (GGAGPDMGAGAGPDM) are enriched in gly residues.

Belongs to the heat shock protein 70 family.

In terms of biological role, acts as a chaperone. The chain is Chaperone protein DnaK from Lachnospira eligens (strain ATCC 27750 / DSM 3376 / VPI C15-48 / C15-B4) (Eubacterium eligens).